The sequence spans 88 residues: Exodeoxyribonuclease 7 small subunit (88 aa).

Residues 69–88 (DPMRPDDGEPFDPSIVSTSQ) form a disordered region.

The protein belongs to the XseB family. In terms of assembly, heterooligomer composed of large and small subunits.

Its subcellular location is the cytoplasm. It catalyses the reaction Exonucleolytic cleavage in either 5'- to 3'- or 3'- to 5'-direction to yield nucleoside 5'-phosphates.. Its function is as follows. Bidirectionally degrades single-stranded DNA into large acid-insoluble oligonucleotides, which are then degraded further into small acid-soluble oligonucleotides. In Xylella fastidiosa (strain M12), this protein is Exodeoxyribonuclease 7 small subunit.